The primary structure comprises 185 residues: Ribosome-recycling factor (185 aa).

The protein belongs to the RRF family.

The protein localises to the cytoplasm. Responsible for the release of ribosomes from messenger RNA at the termination of protein biosynthesis. May increase the efficiency of translation by recycling ribosomes from one round of translation to another. This Nitrosomonas europaea (strain ATCC 19718 / CIP 103999 / KCTC 2705 / NBRC 14298) protein is Ribosome-recycling factor.